Reading from the N-terminus, the 211-residue chain is Small ribosomal subunit protein uS3 (211 aa).

Residues 38 to 106 enclose the KH type-2 domain; it reads LRNFLKKRLY…EIYLNIQEVR (69 aa).

The protein belongs to the universal ribosomal protein uS3 family. Part of the 30S ribosomal subunit. Forms a tight complex with proteins S10 and S14.

In terms of biological role, binds the lower part of the 30S subunit head. Binds mRNA in the 70S ribosome, positioning it for translation. This is Small ribosomal subunit protein uS3 from Geobacter sulfurreducens (strain ATCC 51573 / DSM 12127 / PCA).